A 61-amino-acid chain; its full sequence is Small ribosomal subunit protein uS14 (61 aa).

Zn(2+)-binding residues include Cys24, Cys27, Cys40, and Cys43.

It belongs to the universal ribosomal protein uS14 family. Zinc-binding uS14 subfamily. As to quaternary structure, part of the 30S ribosomal subunit. Contacts proteins S3 and S10. Requires Zn(2+) as cofactor.

Binds 16S rRNA, required for the assembly of 30S particles and may also be responsible for determining the conformation of the 16S rRNA at the A site. This Syntrophobacter fumaroxidans (strain DSM 10017 / MPOB) protein is Small ribosomal subunit protein uS14.